A 101-amino-acid polypeptide reads, in one-letter code: Small ribosomal subunit protein uS14 (101 aa).

This sequence belongs to the universal ribosomal protein uS14 family. Part of the 30S ribosomal subunit. Contacts proteins S3 and S10.

Binds 16S rRNA, required for the assembly of 30S particles and may also be responsible for determining the conformation of the 16S rRNA at the A site. This is Small ribosomal subunit protein uS14 from Actinobacillus pleuropneumoniae serotype 5b (strain L20).